A 247-amino-acid polypeptide reads, in one-letter code: Eukaryotic translation initiation factor 6-1 (247 aa).

It belongs to the eIF-6 family. In terms of assembly, monomer. Associates with the 60S ribosomal subunit.

It localises to the cytoplasm. Its subcellular location is the nucleus. It is found in the nucleolus. Binds to the 60S ribosomal subunit and prevents its association with the 40S ribosomal subunit to form the 80S initiation complex in the cytoplasm. May also be involved in ribosome biogenesis. The polypeptide is Eukaryotic translation initiation factor 6-1 (Arabidopsis thaliana (Mouse-ear cress)).